A 407-amino-acid polypeptide reads, in one-letter code: L-amino-acid oxidase (407 aa).

C10 and C94 are disulfide-bonded. N93 carries an N-linked (GlcNAc...) asparagine glycan. H144 serves as a coordination point for substrate. V182 contributes to the FAD binding site. A disulfide bond links C252 and C333. The N-linked (GlcNAc...) asparagine glycan is linked to N282. A substrate-binding site is contributed by Y293. Residues E378 and 385-390 (GWIDST) contribute to the FAD site. 385-386 (GW) is a substrate binding site.

It belongs to the flavin monoamine oxidase family. FIG1 subfamily. Homodimer; non-covalently linked. FAD serves as cofactor. In terms of tissue distribution, expressed by the venom gland.

The protein localises to the secreted. It catalyses the reaction an L-alpha-amino acid + O2 + H2O = a 2-oxocarboxylate + H2O2 + NH4(+). The enzyme catalyses L-leucine + O2 + H2O = 4-methyl-2-oxopentanoate + H2O2 + NH4(+). It carries out the reaction L-phenylalanine + O2 + H2O = 3-phenylpyruvate + H2O2 + NH4(+). The catalysed reaction is L-isoleucine + O2 + H2O = (S)-3-methyl-2-oxopentanoate + H2O2 + NH4(+). It catalyses the reaction L-aspartate + O2 + H2O = oxaloacetate + H2O2 + NH4(+). The enzyme catalyses L-lysine + O2 + H2O = 6-amino-2-oxohexanoate + H2O2 + NH4(+). It carries out the reaction L-glutamate + O2 + H2O = H2O2 + 2-oxoglutarate + NH4(+). Catalyzes an oxidative deamination of predominantly hydrophobic and aromatic L-amino acids, thus producing hydrogen peroxide that may contribute to the diverse toxic effects of this enzyme. Is highly active on L-Leu followed by L-Phe and L-Ile, moderately active on L-Asp, L-Glu, and L-Lys, and not active on L-Pro, L-Asn, L-Gly, L-Ser and L-Cys. Exhibits diverse biological activities such as antibacterial activity (Minimal inhibitory concentrations (MIC) are 9.0 ug/ml against S.aureus, 144.0 ug/ml against P.aeruginosa and 288.0 ug/ml against E.coli) and inhibition of ADP- and TMVA-induced platelet aggregation. Effects of snake L-amino oxidases on platelets are controversial, since they either induce aggregation or inhibit agonist-induced aggregation. These different effects are probably due to different experimental conditions. Unlike other snake venom L-amino acid oxidases, does not induce hemorrhage. This protein may also induce hemolysis, edema, apoptosis and have antiparasitic activities. The sequence is that of L-amino-acid oxidase from Daboia siamensis (Eastern Russel's viper).